The following is a 51-amino-acid chain: Large ribosomal subunit protein eL39 (51 aa).

It belongs to the eukaryotic ribosomal protein eL39 family.

This chain is Large ribosomal subunit protein eL39 (RpL39), found in Plutella xylostella (Diamondback moth).